A 163-amino-acid polypeptide reads, in one-letter code: Probable cobalt-precorrin-6B C(15)-methyltransferase (decarboxylating) (163 aa).

Residues T6, 30 to 34 (GCGSG), D51, and G75 each bind S-adenosyl-L-methionine.

It belongs to the methyltransferase superfamily. Archaeal-type CbiT family.

The enzyme catalyses Co-precorrin-6B + S-adenosyl-L-methionine = Co-precorrin-7 + S-adenosyl-L-homocysteine + CO2. It functions in the pathway cofactor biosynthesis; adenosylcobalamin biosynthesis; cob(II)yrinate a,c-diamide from sirohydrochlorin (anaerobic route): step 8/10. Its function is as follows. Catalyzes the methylation of C-15 in cobalt-precorrin-6B followed by the decarboxylation of C-12 to form cobalt-precorrin-7. The polypeptide is Probable cobalt-precorrin-6B C(15)-methyltransferase (decarboxylating) (Archaeoglobus fulgidus (strain ATCC 49558 / DSM 4304 / JCM 9628 / NBRC 100126 / VC-16)).